The sequence spans 468 residues: Ribosomal protein uS12 methylthiotransferase RimO (468 aa).

An MTTase N-terminal domain is found at 18-129; the sequence is PTVAFAHLGC…IVEVLERVEA (112 aa). Cysteine 27, cysteine 63, cysteine 92, cysteine 167, cysteine 171, and cysteine 174 together coordinate [4Fe-4S] cluster. Positions 153 to 382 constitute a Radical SAM core domain; sequence TTGEAVAYLK…MTLQQPISAA (230 aa). In terms of domain architecture, TRAM spans 385–456; it reads ARWVGRTVDA…IYDLRAEIVG (72 aa).

Belongs to the methylthiotransferase family. RimO subfamily. The cofactor is [4Fe-4S] cluster.

The protein localises to the cytoplasm. It catalyses the reaction L-aspartate(89)-[ribosomal protein uS12]-hydrogen + (sulfur carrier)-SH + AH2 + 2 S-adenosyl-L-methionine = 3-methylsulfanyl-L-aspartate(89)-[ribosomal protein uS12]-hydrogen + (sulfur carrier)-H + 5'-deoxyadenosine + L-methionine + A + S-adenosyl-L-homocysteine + 2 H(+). Catalyzes the methylthiolation of an aspartic acid residue of ribosomal protein uS12. This is Ribosomal protein uS12 methylthiotransferase RimO from Synechococcus sp. (strain WH7803).